We begin with the raw amino-acid sequence, 146 residues long: Meiotically up-regulated gene 96 protein (146 aa).

The chain crosses the membrane as a helical span at residues 85 to 104 (LIRYSLILTCLVAILLSVLW).

The protein localises to the cytoplasm. Its subcellular location is the membrane. Functionally, has a role in meiosis. This Schizosaccharomyces pombe (strain 972 / ATCC 24843) (Fission yeast) protein is Meiotically up-regulated gene 96 protein (mug96).